Here is a 405-residue protein sequence, read N- to C-terminus: Adenylosuccinate synthetase (405 aa).

GTP is bound by residues 12–18 (GDEGKGK) and 40–42 (GHT). Residue Asp13 is the Proton acceptor of the active site. The Mg(2+) site is built by Asp13 and Gly40. IMP-binding positions include 13–16 (DEGK), 38–41 (NAGH), Thr121, Arg135, Gln213, Thr228, and Arg297. Residue His41 is the Proton donor of the active site. 293–299 (TTTGRPR) is a binding site for substrate. GTP-binding positions include Arg299, 325-327 (KMD), and 390-392 (SAG).

Belongs to the adenylosuccinate synthetase family. In terms of assembly, homodimer. It depends on Mg(2+) as a cofactor.

Its subcellular location is the cytoplasm. The catalysed reaction is IMP + L-aspartate + GTP = N(6)-(1,2-dicarboxyethyl)-AMP + GDP + phosphate + 2 H(+). The protein operates within purine metabolism; AMP biosynthesis via de novo pathway; AMP from IMP: step 1/2. Its function is as follows. Plays an important role in the de novo pathway of purine nucleotide biosynthesis. Catalyzes the first committed step in the biosynthesis of AMP from IMP. The chain is Adenylosuccinate synthetase from Deinococcus radiodurans (strain ATCC 13939 / DSM 20539 / JCM 16871 / CCUG 27074 / LMG 4051 / NBRC 15346 / NCIMB 9279 / VKM B-1422 / R1).